Here is a 92-residue protein sequence, read N- to C-terminus: Small ribosomal subunit protein uS19 (92 aa).

The protein belongs to the universal ribosomal protein uS19 family.

Its function is as follows. Protein S19 forms a complex with S13 that binds strongly to the 16S ribosomal RNA. The protein is Small ribosomal subunit protein uS19 of Psychromonas ingrahamii (strain DSM 17664 / CCUG 51855 / 37).